Reading from the N-terminus, the 293-residue chain is uncharacterized protein (293 aa).

Residues Thr-43 and Tyr-105 each act as charge relay system in the active site. Tyr-131 (proton donor) is an active-site residue. Catalysis depends on Lys-159, which acts as the Schiff-base intermediate with substrate.

Belongs to the DapA family. Homotetramer.

It localises to the cytoplasm. This is an uncharacterized protein from Thermococcus onnurineus (strain NA1).